A 315-amino-acid chain; its full sequence is Probable cytochrome c oxidase subunit 2 (315 aa).

One can recognise an RPE1 insert domain in the interval 6–53; sequence RHLSKPAYREEFKGDTSPRTAAYISNRADASLGSTYKLPLEAKFWKMS. The next 3 helical transmembrane spans lie at 41–61, 96–116, and 133–153; these read YKLP…CFLI, LLYI…FVCI, and VLIE…IAVP. Cu cation contacts are provided by His235, Cys270, Cys274, and His278.

Belongs to the cytochrome c oxidase subunit 2 family. The cofactor is Cu cation. It depends on heme as a cofactor.

It localises to the cell membrane. It catalyses the reaction 4 Fe(II)-[cytochrome c] + O2 + 8 H(+)(in) = 4 Fe(III)-[cytochrome c] + 2 H2O + 4 H(+)(out). Subunits I and II form the functional core of the enzyme complex. Electrons originating in cytochrome c are transferred via heme a and Cu(A) to the binuclear center formed by heme a3 and Cu(B). The sequence is that of Probable cytochrome c oxidase subunit 2 (ctaC) from Rickettsia felis (strain ATCC VR-1525 / URRWXCal2) (Rickettsia azadi).